Here is a 2725-residue protein sequence, read N- to C-terminus: MEQTDCKPYQPLPKVKHEMDLAYTSSSDESEDGRKPRQSYNSRETLHEYNQELRMNYNSQSRKRKEVEKSTQEMEFCETSHTLCSGYQTDMHSVSRHGYQLEMGSDVDTETEGAASPDHALRMWIRGMKSEHSSCLSSRANSALSLTDTDHERKSDGENGFKFSPVCCDMEAQAGSTQDVQSSPHNQFTFRPLPPPPPPPHACTCARKPPPAADSLQRRSMTTRSQPSPAAPAPPTSTQDSVHLHNSWVLNSNIPLETRHFLFKHGSGSSAIFSAASQNYPLTSNTVYSPPPRPLPRSTFSRPAFTFNKPYRCCNWKCTALSATAITVTLALLLAYVIAVHLFGLTWQLQPVEGELYANGVSKGNRGTESMDTTYSPIGGKVSDKSEKKVFQKGRAIDTGEVDIGAQVMQTIPPGLFWRFQITIHHPIYLKFNISLAKDSLLGIYGRRNIPPTHTQFDFVKLMDGKQLVKQDSKGSDDTQHSPRNLILTSLQETGFIEYMDQGPWYLAFYNDGKKMEQVFVLTTAIEIMDDCSTNCNGNGECISGHCHCFPGFLGPDCARDSCPVLCGGNGEYEKGHCVCRHGWKGPECDVPEEQCIDPTCFGHGTCIMGVCICVPGYKGEICEEEDCLDPMCSNHGICVKGECHCSTGWGGVNCETPLPVCQEQCSGHGTFLLDAGVCSCDPKWTGSDCSTELCTMECGSHGVCSRGICQCEEGWVGPTCEERSCHSHCTEHGQCKDGKCECSPGWEGDHCTIAHYLDAVRDGCPGLCFGNGRCTLDQNGWHCVCQVGWSGTGCNVVMEMLCGDNLDNDGDGLTDCVDPDCCQQSNCYISPLCQGSPDPLDLIQQSQTLFSQHTSRLFYDRIKFLIGKDSTHVIPPEVSFDSRRACVIRGQVVAIDGTPLVGVNVSFLHHSDYGFTISRQDGSFDLVAIGGISVILIFDRSPFLPEKRTLWLPWNQFIVVEKVTMQRVVSDPPSCDISNFISPNPIVLPSPLTSFGGSCPERGTIVPELQVVQEEIPIPSSFVRLSYLSSRTPGYKTLLRILLTHSTIPVGMIKVHLTVAVEGRLTQKWFPAAINLVYTFAWNKTDIYGQKVWGLAEALVSVGYEYETCPDFILWEQRTVVLQGFEMDASNLGGWSLNKHHILNPQSGIIHKGNGENMFISQQPPVISTIMGNGHQRSVACTNCNGPAHNNKLFAPVALASGPDGSVYVGDFNFVRRIFPSGNSVSILELSTSPAHKYYLAMDPVSESLYLSDTNTRKVYKLKSLVETKDLSKNFEVVAGTGDQCLPFDQSHCGDGGRASEASLNSPRGITVDRHGFIYFVDGTMIRKIDENAVITTVIGSNGLTSTQPLSCDSGMDITQVRLEWPTDLAVNPMDNSLYVLDNNIVLQISENRRVRIIAGRPIHCQVPGIDHFLVSKVAIHSTLESARAISVSHSGLLFIAETDERKVNRIQQVTTNGEIYIIAGAPTDCDCKIDPNCDCFSGDGGYAKDAKMKAPSSLAVSPDGTLYVADLGNVRIRTISRNQAHLNDMNIYEIASPADQELYQFTVNGTHLHTLNLITRDYVYNFTYNSEGDLGAITSSNGNSVHIRRDAGGMPLWLVVPGGQVYWLTISSNGVLKRVSAQGYNLALMTYPGNTGLLATKSNENGWTTVYEYDPEGHLTNATFPTGEVSSFHSDLEKLTKVELDTSNRENVLMSTNLTATSTIYILKQENTQSTYRVNPDGSLRVTFASGMEIGLSSEPHILAGAVNPTLGKCNISLPGEHNANLIEWRQRKEQNKGNVSAFERRLRAHNRNLLSIDFDHITRTGKIYDDHRKFTLRILYDQTGRPILWSPVSRYNEVNITYSPSGLVTFIQRGTWNEKMEYDQSGKIISRTWADGKIWSYTYLEKSVMLLLHSQRRYIFEYDQPDCLLSVTMPSMVRHSLQTMLSVGYYRNIYTPPDSSTSFIQDYSRDGRLLQTLHLGTGRRVLYKYTKQARLSEVLYDTTQVTLTYEESSGVIKTIHLMHDGFICTIRYRQTGPLIGRQIFRFSEEGLVNARFDYSYNNFRVTSMQAVINETPLPIDLYRYVDVSGRTEQFGKFSVINYDLNQVITTTVMKHTKIFSANGQVIEVQYEILKAIAYWMTIQYDNVGRMVICDIRVGVDANITRYFYEYDADGQLQTVSVNDKTQWRYSYDLNGNINLLSHGKSARLTPLRYDLRDRITRLGEIQYKMDEDGFLRQRGNDIFEYNSNGLLQKAYNKASGWTVQYYYDGLGRRVASKSSLGQHLQFFYADLTNPIRVTHLYNHTSSEITSLYYDLQGHLIAMELSSGEEYYVACDNTGTPLAVFSSRGQVIKEILYTPYGDIYHDTYPDFQVIIGFHGGLYDFLTKLVHLGQRDYDVVAGRWTTPNHHIWKQLNLLPKPFNLYSFENNYPVGKIQDVAKYTTDIRSWLELFGFQLHNVLPGFPKPELENLELTYELLRLQTKTQEWDPGKTILGIQCELQKQLRNFISLDQLPMTPRYNDGRCLEGGKQPRFAAVPSVFGKGIKFAIKDGIVTADIIGVANEDSRRLAAILNNAHYLENLHFTIEGRDTHYFIKLGSLEEDLVLIGNTGGRRILENGVNVTVSQMTSVLNGRTRRFADIQLQHGALCFNIRYGTTVEEEKNHVLEIARQRAVAQAWTKEQRRLQEGEEGIRAWTEGEKQQLLSTGRVQGYDGYFVLSVEQYLELSDSANNIHFMRQSEIGRR.

The tract at residues 1–48 (MEQTDCKPYQPLPKVKHEMDLAYTSSSDESEDGRKPRQSYNSRETLHE) is disordered. The region spanning 1–318 (MEQTDCKPYQ…KPYRCCNWKC (318 aa)) is the Teneurin N-terminal domain. Topologically, residues 1–324 (MEQTDCKPYQ…NWKCTALSAT (324 aa)) are cytoplasmic. The Nuclear localization signal (NLS) signature appears at 62-65 (RKRK). S105 carries the post-translational modification Phosphoserine. T109 carries the post-translational modification Phosphothreonine. Residue S116 is modified to Phosphoserine. Residues 174 to 189 (AGSTQDVQSSPHNQFT) show a composition bias toward polar residues. The interval 174 to 241 (AGSTQDVQSS…PAPPTSTQDS (68 aa)) is disordered. The span at 192 to 201 (PLPPPPPPPH) shows a compositional bias: pro residues. The short motif at 290 to 297 (PPPRPLPR) is the Required for interaction with SORBS1 (Ten-1 ICD form) element. The chain crosses the membrane as a helical span at residues 325-345 (AITVTLALLLAYVIAVHLFGL). Residues 346–2725 (TWQLQPVEGE…FMRQSEIGRR (2380 aa)) are Extracellular-facing. N-linked (GlcNAc...) asparagine glycosylation is present at N433. 8 EGF-like domains span residues 528 to 559 (IMDDCSTNCNGNGECISGHCHCFPGFLGPDCA), 560 to 591 (RDSCPVLCGGNGEYEKGHCVCRHGWKGPECDV), 592 to 624 (PEEQCIDPTCFGHGTCIMGVCICVPGYKGEICE), 625 to 657 (EEDCLDPMCSNHGICVKGECHCSTGWGGVNCET), 658 to 691 (PLPVCQEQCSGHGTFLLDAGVCSCDPKWTGSDCS), 692 to 721 (TELCTMECGSHGVCSRGICQCEEGWVGPTC), 722 to 753 (EERSCHSHCTEHGQCKDGKCECSPGWEGDHCT), and 761 to 796 (VRDGCPGLCFGNGRCTLDQNGWHCVCQVGWSGTGCN). Cystine bridges form between C532/C542, C536/C547, C549/C558, C567/C578, C580/C589, C596/C607, C601/C612, C614/C623, C628/C639, C633/C644, C646/C655, C666/C679, C681/C690, C695/C705, C699/C710, C712/C721, C726/C736, C730/C741, C743/C752, C765/C775, C769/C784, and C786/C795. N905 and N1084 each carry an N-linked (GlcNAc...) asparagine glycan. NHL repeat units lie at residues 1194-1219 (LFAPVALASGPDGSVYVGDFNFVRRI), 1292-1336 (SHCG…NAVI), 1351-1402 (LSCD…IAGR), 1414-1458 (FLVS…VTTN), and 1481-1524 (CFSG…ISRN). Residues 1534 to 1553 (YEIASPADQELYQFTVNGTH) form a YD 1 repeat. N1550 and N1567 each carry an N-linked (GlcNAc...) asparagine glycan. 4 YD repeats span residues 1570–1590 (YNSEGDLGAITSSNGNSVHIR), 1608–1632 (YWLTISSNGVLKRVSAQGYNLALMT), 1633–1654 (YPGNTGLLATKSNENGWTTVYE), and 1655–1675 (YDPEGHLTNATFPTGEVSSFH). N-linked (GlcNAc...) asparagine glycosylation is found at N1663, N1699, N1757, N1781, and N1842. YD repeat units lie at residues 1845–1864 (YSPSGLVTFIQRGTWNEKME), 1865–1885 (YDQSGKIISRTWADGKIWSYT), 1886–1904 (YLEKSVMLLLHSQRRYIFE), 1905–1925 (YDQPDCLLSVTMPSMVRHSLQ), 1933–1949 (YRNIYTPPDSSTSFIQD), 1950–1969 (YSRDGRLLQTLHLGTGRRVL), 1970–1989 (YKYTKQARLSEVLYDTTQVT), 1992–2012 (YEESSGVIKTIHLMHDGFICT), 2015–2035 (YRQTGPLIGRQIFRFSEEGLV), 2085–2105 (YDLNQVITTTVMKHTKIFSAN), and 2113–2133 (YEILKAIAYWMTIQYDNVGRM). N2145 carries an N-linked (GlcNAc...) asparagine glycan. YD repeat units follow at residues 2153–2173 (YDADGQLQTVSVNDKTQWRYS), 2174–2194 (YDLNGNINLLSHGKSARLTPL), 2196–2216 (YDLRDRITRLGEIQYKMDEDG), 2228–2248 (YNSNGLLQKAYNKASGWTVQY), and 2250–2270 (YDGLGRRVASKSSLGQHLQFF). An N-linked (GlcNAc...) asparagine glycan is attached at N2285. YD repeat units follow at residues 2296–2313 (YDLQGHLIAMELSSGEEY) and 2314–2337 (YVACDNTGTPLAVFSSRGQVIKEI). At S2580 the chain carries Phosphoserine. The N-linked (GlcNAc...) asparagine glycan is linked to N2602.

This sequence belongs to the tenascin family. Teneurin subfamily. In terms of assembly, homodimer; disulfide-linked. Heterodimer with either TENM2 or TENM3. May also form heterodimer with TENM4. Ten-1 ICD interacts with SORBS1 (via third SH3 domain). Interacts with MBD1. Ten-1 ICD interacts with HINT1. Derives from the plasma membrane form by proteolytic processing. Further proteolytic cleavage may be generated. Expressed in fetal brain.

It localises to the cell membrane. It is found in the nucleus. Its subcellular location is the nucleus speckle. The protein resides in the nucleus matrix. The protein localises to the cytoplasm. It localises to the cytoskeleton. Functionally, involved in neural development, regulating the establishment of proper connectivity within the nervous system. May function as a cellular signal transducer. Its function is as follows. Plays a role in the regulation of neuroplasticity in the limbic system. Mediates a rapid reorganization of actin- and tubulin-based cytoskeleton elements with an increase in dendritic arborization and spine density formation of neurons in the hippocampus and amygdala. Induces BDNF transcription inhibition in neurons. Activates the mitogen-activated protein (MAP) kinase 2 (MEK2) and extracellular signal-regulated kinase (ERK) cascade. Also acts as a bioactive neuroprotective peptide on limbic neurons of the brain and regulates stress-induced behavior: attenuates alkalosis-associated necrotic cell death and the effects of corticotropin-releasing factor (CRF) on c-fos/FOS induction and on the reinstatement of cocaine seeking. In terms of biological role, induces gene transcription activation. The chain is Teneurin-1 (TENM1) from Homo sapiens (Human).